A 758-amino-acid polypeptide reads, in one-letter code: MSKKRGRRHTAKEDSNSDYETDTYGLADGDDKSRPYYLVEDLPCSLEPPRYDTFTYPLSVKDSAVLYSSLLSSRRTWVKGEMFQLYWAKQYMNTKEKEELKKEGIDPDSIDQSAAREKMNKLCDCMMQGGPHQFPIRLFILKNDEVERAWNEAKEAKKRDREVRKKQQEEEKRLKKERKLLRKKLKQEALEKEKEKNKDKVKKPRKPYKKSAKRLEAERLKKEEKAKAAANTSGVKKKISKTSNVKKKKMKAVVRPKPYEEQVMILNLNKMARNDKQLNDLMIKVAGGQASLAEITQFKKYIEKAKAMPPPSGTWKPMLEEVEVTDDGESDEDVKELEVTEKSEDVTPTEVALPKAAVAAKEVKDVVVTPNLPPGTENSGNGKPPSLDESNAQESTDVNKNQPIQRLNISKNVQSVKNDITENTDLASNEHMNEKQVQKTPESTTEHKPDEKPKDAAMSKSNEKKPDEDTAQDTSKDDENKSDKSDSDSDSDSDSDNDSSSSDESDNEDNTSQTKNSIDNTDDGVTSEKADTNTDVSSDKPPDDIKSEGEVAAPRVKRKYRRRSKVKTEEEEEEEKAMQLTTFQQKYSNGADMVFEYVENANVRFLLPKYSILEQLEGEESYLLSFIVVHNRREVALFTTRKLKELNKKKNKEDHIKPEDYNPFEDARCPDPLFSSITLKLTGIPKKFSNIILNSFHPQERVQLYMKSIIDRGSRLSGYNLWYQLDAYDDKELAERLRVGLKEYEQTFKSKRQKKQIL.

The span at Met-1–Thr-10 shows a compositional bias: basic residues. Disordered regions lie at residues Met-1 to Arg-34, Ala-153 to Val-253, and Glu-323 to Ala-577. Residues Asn-151–Ser-233 are a coiled coil. A compositionally biased stretch (basic and acidic residues) spans Ala-153–Leu-174. The segment covering Lys-175 to Leu-185 has biased composition (basic residues). Residues Lys-186–Lys-198 are compositionally biased toward basic and acidic residues. Residues Asp-199–Ala-212 are compositionally biased toward basic residues. Over residues Lys-213 to Lys-227 the composition is skewed to basic and acidic residues. A compositionally biased stretch (basic residues) spans Val-235–Val-253. Positions Glu-323 to Lys-335 are enriched in acidic residues. Basic and acidic residues predominate over residues Glu-336–Asp-345. Residues Val-351–Ala-360 show a composition bias toward low complexity. Residues Asp-388–Ala-427 show a composition bias toward polar residues. A compositionally biased stretch (basic and acidic residues) spans Thr-444–Ser-487. Positions Asp-488 to Asp-509 are enriched in acidic residues. Residues Thr-526–Gly-549 are compositionally biased toward basic and acidic residues. The span at Arg-555–Lys-565 shows a compositional bias: basic residues.

The protein belongs to the SWC3 family. As to quaternary structure, component of the SWR1 chromatin remodeling complex.

The protein localises to the nucleus. Its function is as follows. Component of the SWR1 complex which mediates the ATP-dependent exchange of histone H2A for the H2A variant HZT1 leading to transcriptional regulation of selected genes by chromatin remodeling. Involved in chromosome stability. The chain is SWR1-complex protein 3 (SWC3) from Kluyveromyces lactis (strain ATCC 8585 / CBS 2359 / DSM 70799 / NBRC 1267 / NRRL Y-1140 / WM37) (Yeast).